The primary structure comprises 287 residues: Membrane protein insertase YidC 2 (287 aa).

Positions 1–26 (MKKKKRFKQKLLIASLVIGLVAVLSG) are cleaved as a signal peptide. C27 carries N-palmitoyl cysteine lipidation. C27 carries S-diacylglycerol cysteine lipidation. The next 5 membrane-spanning stretches (helical) occupy residues 65-85 (YAVGIIVVTILIRLLIMPLMI), 135-155 (MMGCLPLLIQMPILLGFYQAI), 178-198 (YILPIVAALTTFLSSKISMMG), 207-224 (AMIVYIMPVMILFMGITL), and 228-250 (LALYWIIGNIFTVFQTLLINNPF).

This sequence belongs to the OXA1/ALB3/YidC family. Type 2 subfamily.

The protein resides in the cell membrane. In terms of biological role, required for the insertion and/or proper folding and/or complex formation of integral membrane proteins into the membrane. Involved in integration of membrane proteins that insert both dependently and independently of the Sec translocase complex, as well as at least some lipoproteins. This Listeria innocua serovar 6a (strain ATCC BAA-680 / CLIP 11262) protein is Membrane protein insertase YidC 2.